Consider the following 247-residue polypeptide: UPF0280 protein MMP1236 (247 aa).

Belongs to the UPF0280 family.

The sequence is that of UPF0280 protein MMP1236 from Methanococcus maripaludis (strain DSM 14266 / JCM 13030 / NBRC 101832 / S2 / LL).